The following is a 68-amino-acid chain: Protein transport protein Sec61 subunit gamma (68 aa).

Topologically, residues 1-32 (MDQFQALIEPARQFSKDSYRLVKRCTKPDRKE) are cytoplasmic. The chain crosses the membrane as a helical span at residues 33–61 (YQKIAMATAIGFAIMGFIGFFVKLIHIPI). Residues 62–68 (NNIIVGA) lie on the Extracellular side of the membrane.

The protein belongs to the SecE/SEC61-gamma family. As to quaternary structure, heterotrimeric complex composed of SEC61-alpha, SEC61-beta and SEC61-gamma. As to expression, expressed in the germline. Expression in the germline is regulated in a sex- and meiotic cycle stage-specific manner. Expressed in somatic tissues including the intestine and somatic gonad. Expressed in the intestine more highly in hermaprodites than in males. In hermaphrodites, weakly expressed in the spermatheca.

Its subcellular location is the endoplasmic reticulum membrane. In terms of biological role, required for oocyte development and ovulation. Required for the translocation of secretory and transmembrane proteins into the endoplasmic reticulum in vitro. In Caenorhabditis elegans, this protein is Protein transport protein Sec61 subunit gamma.